We begin with the raw amino-acid sequence, 462 residues long: L-seryl-tRNA(Sec) selenium transferase (462 aa).

N6-(pyridoxal phosphate)lysine is present on lysine 294.

It belongs to the SelA family. As to quaternary structure, homodecamer; pentamer of dimers. Binds only one seryl-tRNA(Sec) per dimer. Pyridoxal 5'-phosphate is required as a cofactor.

The protein resides in the cytoplasm. It carries out the reaction L-seryl-tRNA(Sec) + selenophosphate + H(+) = L-selenocysteinyl-tRNA(Sec) + phosphate. It participates in aminoacyl-tRNA biosynthesis; selenocysteinyl-tRNA(Sec) biosynthesis; selenocysteinyl-tRNA(Sec) from L-seryl-tRNA(Sec) (bacterial route): step 1/1. Converts seryl-tRNA(Sec) to selenocysteinyl-tRNA(Sec) required for selenoprotein biosynthesis. The chain is L-seryl-tRNA(Sec) selenium transferase from Yersinia pseudotuberculosis serotype O:1b (strain IP 31758).